A 56-amino-acid chain; its full sequence is Small ribosomal subunit protein bS21 (56 aa).

This sequence belongs to the bacterial ribosomal protein bS21 family.

In Synechococcus sp. (strain WH7803), this protein is Small ribosomal subunit protein bS21.